The sequence spans 120 residues: NAD(P)H-quinone oxidoreductase subunit 3 (120 aa).

3 helical membrane passes run 10–30, 64–84, and 89–109; these read FLGF…TNLI, MFAL…PWAV, and LGLL…IALA.

The protein belongs to the complex I subunit 3 family. In terms of assembly, NDH-1 can be composed of about 15 different subunits; different subcomplexes with different compositions have been identified which probably have different functions.

It is found in the cellular thylakoid membrane. The catalysed reaction is a plastoquinone + NADH + (n+1) H(+)(in) = a plastoquinol + NAD(+) + n H(+)(out). It carries out the reaction a plastoquinone + NADPH + (n+1) H(+)(in) = a plastoquinol + NADP(+) + n H(+)(out). NDH-1 shuttles electrons from an unknown electron donor, via FMN and iron-sulfur (Fe-S) centers, to quinones in the respiratory and/or the photosynthetic chain. The immediate electron acceptor for the enzyme in this species is believed to be plastoquinone. Couples the redox reaction to proton translocation, and thus conserves the redox energy in a proton gradient. Cyanobacterial NDH-1 also plays a role in inorganic carbon-concentration. The protein is NAD(P)H-quinone oxidoreductase subunit 3 of Prochlorococcus marinus subsp. pastoris (strain CCMP1986 / NIES-2087 / MED4).